The primary structure comprises 340 residues: Gigasin-2 (340 aa).

A signal peptide spans 1–21; sequence MNKMSPLYVLALCCLATTVFA. EGF-like domains lie at 22-57 and 65-97; these read KYDCTNNGGYGCKYGGTCHFYGFCICPKGFQGEDCG and TAANCTAECKNGGTCYESDRCYCPHGFIGDMCE. Cystine bridges form between Cys25-Cys39, Cys33-Cys45, Cys47-Cys56, Cys69-Cys79, Cys73-Cys85, and Cys87-Cys96.

Component of the organic matrix of calcified shell layers.

The polypeptide is Gigasin-2 (Magallana gigas (Pacific oyster)).